We begin with the raw amino-acid sequence, 566 residues long: MOB kinase activator-like 2 (566 aa).

Disordered stretches follow at residues 28–57 and 74–118; these read ADAT…SSLS and GRAV…GAQA. The span at 35-57 shows a compositional bias: low complexity; sequence SSTAPQTPTASTPRPSSSHSSLS. Residues 85–115 show a composition bias toward gly residues; the sequence is QNGGKGNASGAGGGAGGGGAGGASGGTGGTG. The Zn(2+) site is built by cysteine 209, cysteine 214, histidine 289, and histidine 294. 2 disordered regions span residues 346–407 and 498–541; these read GGCQ…SASA and FSNN…QCNA. Over residues 367–388 the composition is skewed to low complexity; that stretch reads LQHQSLQQQQQHHNSSSNSTSS. Residues 394–407 show a composition bias toward polar residues; it reads VNSQSNNGSTSASA. Residues 498-507 are compositionally biased toward low complexity; that stretch reads FSNNNNNNHN. Positions 508–526 are enriched in basic residues; that stretch reads LNHHHHHHHHHGHHGHHHA.

It belongs to the MOB1/phocein family. In terms of assembly, interacts with and activates trc, also interacts with wts.

The protein localises to the cytoplasm. It is found in the nucleus. Required for the normal morphogenesis of a variety of polarized outgrowths including epidermal hairs, bristles, arista laterals, and dendrites. This is MOB kinase activator-like 2 (Mob2) from Drosophila melanogaster (Fruit fly).